A 53-amino-acid polypeptide reads, in one-letter code: Antitoxin RelB3 (53 aa).

In terms of assembly, forms heterodimers with RelE and possibly a heterotetramer RelE3-RelB3(2)-RelE3 from 2 heterodimers. The heterotetramer is probably not very stable in solution.

In terms of biological role, antitoxin component of a type II toxin-antitoxin (TA) system. Probably neutralizes the toxic activity of cognate toxin RelE. In Methanocaldococcus jannaschii (strain ATCC 43067 / DSM 2661 / JAL-1 / JCM 10045 / NBRC 100440) (Methanococcus jannaschii), this protein is Antitoxin RelB3 (relB3).